Consider the following 267-residue polypeptide: 5'-nucleotidase SurE (267 aa).

The a divalent metal cation site is built by Asp-9, Asp-10, Ser-40, and Asn-97.

The protein belongs to the SurE nucleotidase family. A divalent metal cation is required as a cofactor.

The protein localises to the cytoplasm. It carries out the reaction a ribonucleoside 5'-phosphate + H2O = a ribonucleoside + phosphate. Nucleotidase that shows phosphatase activity on nucleoside 5'-monophosphates. The sequence is that of 5'-nucleotidase SurE from Helicobacter pylori (strain Shi470).